The following is a 222-amino-acid chain: Germin-like protein subfamily 1 member 4 (222 aa).

An N-terminal signal peptide occupies residues 1-24; that stretch reads MEGLLQFLLAKIILLALASSFVYC. The cysteines at positions 34 and 50 are disulfide-linked. Residue Asn38 is glycosylated (N-linked (GlcNAc...) asparagine). In terms of domain architecture, Cupin type-1 spans 64 to 215; that stretch reads SGLNVPGNTI…AFALDYNKVK (152 aa). Mn(2+) contacts are provided by His112 and His114. N-linked (GlcNAc...) asparagine glycosylation occurs at Asn139. Residue His161 coordinates Mn(2+).

Belongs to the germin family. Oligomer (believed to be a pentamer but probably hexamer).

Its subcellular location is the secreted. The protein localises to the extracellular space. It localises to the apoplast. Functionally, may play a role in plant defense. Probably has no oxalate oxidase activity even if the active site is conserved. The protein is Germin-like protein subfamily 1 member 4 of Arabidopsis thaliana (Mouse-ear cress).